A 317-amino-acid polypeptide reads, in one-letter code: Melanocyte-stimulating hormone receptor (317 aa).

Residues 1–37 (MPALGSPRRLLGSLNCTPPATLPLTLAPNRTGPQCLE) lie on the Extracellular side of the membrane. N-linked (GlcNAc...) asparagine glycosylation is present at N29. The chain crosses the membrane as a helical span at residues 38 to 63 (VSIPDGLFLSLGLVSLVENVLVVAAI). The Cytoplasmic segment spans residues 64-72 (AKNRNLHSP). Residues 73-93 (MYYFICCLAMSDLLVSVSNVL) traverse the membrane as a helical segment. Over 94–118 (ETAVMLLLEAGVLATRAAVVQQLDN) the chain is Extracellular. A helical membrane pass occupies residues 119-140 (VIDVLICSSMVSSLCFLGAIAV). Over 141–163 (DRYISIFYALRYHSVVTLPRAWR) the chain is Cytoplasmic. A helical transmembrane segment spans residues 164 to 183 (IIAAIWVASILTSVLSITYY). Over 184–191 (NHTVVLLC) the chain is Extracellular. Residues 192–211 (LVGFFIAMLALMAVLYVHML) form a helical membrane-spanning segment. The Cytoplasmic segment spans residues 212 to 240 (ARACQHARGIARLQKRQRPIHQGFGLKGA). The helical transmembrane segment at 241–266 (ATLTILLGVFFLCWGPFFLHLSLIVL) threads the bilayer. Residues 267-279 (CPQHPTCGCIFKN) lie on the Extracellular side of the membrane. Residues 280 to 300 (FNLFLALIICNAIVDPLIYAF) traverse the membrane as a helical segment. The Cytoplasmic portion of the chain corresponds to 301-317 (RSQELRKTLQEVLQCSW). Residue C315 is the site of S-palmitoyl cysteine attachment.

This sequence belongs to the G-protein coupled receptor 1 family. Interacts with MGRN1, but does not undergo MGRN1-mediated ubiquitination; this interaction competes with GNAS-binding and thus inhibits agonist-induced cAMP production. Interacts with OPN3; the interaction results in a decrease in MC1R-mediated cAMP signaling and ultimately a decrease in melanin production in melanocytes.

The protein localises to the cell membrane. Its function is as follows. Receptor for MSH (alpha, beta and gamma) and ACTH. The activity of this receptor is mediated by G proteins which activate adenylate cyclase. Mediates melanogenesis, the production of eumelanin (black/brown) and phaeomelanin (red/yellow), via regulation of cAMP signaling in melanocytes. This is Melanocyte-stimulating hormone receptor (MC1R) from Capra hircus (Goat).